We begin with the raw amino-acid sequence, 294 residues long: 4-hydroxy-tetrahydrodipicolinate synthase (294 aa).

T45 contributes to the pyruvate binding site. Y133 acts as the Proton donor/acceptor in catalysis. Residue K161 is the Schiff-base intermediate with substrate of the active site. I203 serves as a coordination point for pyruvate.

It belongs to the DapA family. In terms of assembly, homotetramer; dimer of dimers.

It is found in the cytoplasm. The catalysed reaction is L-aspartate 4-semialdehyde + pyruvate = (2S,4S)-4-hydroxy-2,3,4,5-tetrahydrodipicolinate + H2O + H(+). It functions in the pathway amino-acid biosynthesis; L-lysine biosynthesis via DAP pathway; (S)-tetrahydrodipicolinate from L-aspartate: step 3/4. Functionally, catalyzes the condensation of (S)-aspartate-beta-semialdehyde [(S)-ASA] and pyruvate to 4-hydroxy-tetrahydrodipicolinate (HTPA). This Shewanella sp. (strain W3-18-1) protein is 4-hydroxy-tetrahydrodipicolinate synthase.